Reading from the N-terminus, the 393-residue chain is Flavohemoprotein (393 aa).

The Globin domain maps to 1-139; that stretch reads MLSNAQRALI…LADLLIEAEE (139 aa). A heme b-binding site is contributed by His85. Residues Tyr95 and Glu138 each act as charge relay system in the active site. The segment at 150–393 is reductase; the sequence is GGWRGVRRFR…FFGPAAALDA (244 aa). Positions 153 to 256 constitute an FAD-binding FR-type domain; that stretch reads RGVRRFRVAR…FPPAGDFVLR (104 aa). FAD-binding positions include Tyr191 and 205 to 208; that span reads RNYS. 268-273 is a binding site for NADP(+); the sequence is GVGITP. 384–387 lines the FAD pocket; sequence FFGP.

The protein belongs to the globin family. Two-domain flavohemoproteins subfamily. It in the C-terminal section; belongs to the flavoprotein pyridine nucleotide cytochrome reductase family. Heme b is required as a cofactor. Requires FAD as cofactor.

It catalyses the reaction 2 nitric oxide + NADPH + 2 O2 = 2 nitrate + NADP(+) + H(+). The enzyme catalyses 2 nitric oxide + NADH + 2 O2 = 2 nitrate + NAD(+) + H(+). In terms of biological role, is involved in NO detoxification in an aerobic process, termed nitric oxide dioxygenase (NOD) reaction that utilizes O(2) and NAD(P)H to convert NO to nitrate, which protects the bacterium from various noxious nitrogen compounds. Therefore, plays a central role in the inducible response to nitrosative stress. The protein is Flavohemoprotein of Pseudomonas aeruginosa (strain ATCC 15692 / DSM 22644 / CIP 104116 / JCM 14847 / LMG 12228 / 1C / PRS 101 / PAO1).